We begin with the raw amino-acid sequence, 140 residues long: Methylglyoxal synthase (140 aa).

The region spanning 1–140 is the MGS-like domain; sequence MKIALIAHDR…HDQDSNPINL (140 aa). Residues His-8, Lys-12, 34 to 37, and 54 to 55 contribute to the substrate site; these read TGTT and SG. Asp-60 acts as the Proton donor/acceptor in catalysis. A substrate-binding site is contributed by His-87.

It belongs to the methylglyoxal synthase family.

It carries out the reaction dihydroxyacetone phosphate = methylglyoxal + phosphate. In terms of biological role, catalyzes the formation of methylglyoxal from dihydroxyacetone phosphate. In Latilactobacillus sakei subsp. sakei (strain 23K) (Lactobacillus sakei subsp. sakei), this protein is Methylglyoxal synthase.